The following is a 459-amino-acid chain: Putrescine aminotransferase (459 aa).

Residues 150-151 (GT) and Gln274 each bind pyridoxal 5'-phosphate. Lys300 carries the N6-(pyridoxal phosphate)lysine modification. Thr332 serves as a coordination point for pyridoxal 5'-phosphate.

It belongs to the class-III pyridoxal-phosphate-dependent aminotransferase family. Putrescine aminotransferase subfamily. Requires pyridoxal 5'-phosphate as cofactor.

The catalysed reaction is an alkane-alpha,omega-diamine + 2-oxoglutarate = an omega-aminoaldehyde + L-glutamate. The enzyme catalyses putrescine + 2-oxoglutarate = 1-pyrroline + L-glutamate + H2O. It catalyses the reaction cadaverine + 2-oxoglutarate = 5-aminopentanal + L-glutamate. It participates in amine and polyamine degradation; putrescine degradation; 4-aminobutanal from putrescine (transaminase route): step 1/1. Catalyzes the aminotransferase reaction from putrescine to 2-oxoglutarate, leading to glutamate and 4-aminobutanal, which spontaneously cyclizes to form 1-pyrroline. This is the first step in one of two pathways for putrescine degradation, where putrescine is converted into 4-aminobutanoate (gamma-aminobutyrate or GABA) via 4-aminobutanal. Also functions as a cadaverine transaminase in a a L-lysine degradation pathway to succinate that proceeds via cadaverine, glutarate and L-2-hydroxyglutarate. This is Putrescine aminotransferase from Salmonella choleraesuis (strain SC-B67).